The primary structure comprises 277 residues: Thymidylate synthase (277 aa).

Arg-21 lines the dUMP pocket. A (6R)-5,10-methylene-5,6,7,8-tetrahydrofolate-binding site is contributed by His-51. 139-140 (RR) is a dUMP binding site. The active-site Nucleophile is Cys-159. Residues 179-182 (RSAD), Asn-190, and 220-222 (HIY) contribute to the dUMP site. Asp-182 provides a ligand contact to (6R)-5,10-methylene-5,6,7,8-tetrahydrofolate. Ala-276 provides a ligand contact to (6R)-5,10-methylene-5,6,7,8-tetrahydrofolate.

Belongs to the thymidylate synthase family. Bacterial-type ThyA subfamily. Homodimer.

It is found in the cytoplasm. The enzyme catalyses dUMP + (6R)-5,10-methylene-5,6,7,8-tetrahydrofolate = 7,8-dihydrofolate + dTMP. It functions in the pathway pyrimidine metabolism; dTTP biosynthesis. In terms of biological role, catalyzes the reductive methylation of 2'-deoxyuridine-5'-monophosphate (dUMP) to 2'-deoxythymidine-5'-monophosphate (dTMP) while utilizing 5,10-methylenetetrahydrofolate (mTHF) as the methyl donor and reductant in the reaction, yielding dihydrofolate (DHF) as a by-product. This enzymatic reaction provides an intracellular de novo source of dTMP, an essential precursor for DNA biosynthesis. This Ruegeria sp. (strain TM1040) (Silicibacter sp.) protein is Thymidylate synthase.